The primary structure comprises 369 residues: MNKAYYIGLMSGTSMDGVDAVLVDFAGEQPQLIATHTEAIPSHLLKGLQRLCLPGNDEINRLGRLDRSVGKLFALAVNNLLAKAQIAKEDIIAIGSHGQTVRHMPNLEVGFTLQIGDPNTIATETGIDVIADFRRKDIALGGQGAPLVPAFHQQTFAQVGKKRVILNIGGIANITYLTGNREEVLGFDTGPGNTLIDAWIQQVKNEPYDKDGEWAASGKTDQQLLAQLLSHPYFSLAYPKSTGRELFNQAWLEQQLSQFNQLDEEDIQSTLLDLTCHSIARDILKLAPVGELFVCGGGAFNSELMQRLAALLPDYHIDTTSALGVDPKWAEGIAFAWLAMRHHLGLPANLPAVTGASREAVLGGRFSAK.

Position 12-19 (12-19 (GTSMDGVD)) interacts with ATP.

This sequence belongs to the anhydro-N-acetylmuramic acid kinase family.

It carries out the reaction 1,6-anhydro-N-acetyl-beta-muramate + ATP + H2O = N-acetyl-D-muramate 6-phosphate + ADP + H(+). Its pathway is amino-sugar metabolism; 1,6-anhydro-N-acetylmuramate degradation. It functions in the pathway cell wall biogenesis; peptidoglycan recycling. Catalyzes the specific phosphorylation of 1,6-anhydro-N-acetylmuramic acid (anhMurNAc) with the simultaneous cleavage of the 1,6-anhydro ring, generating MurNAc-6-P. Is required for the utilization of anhMurNAc either imported from the medium or derived from its own cell wall murein, and thus plays a role in cell wall recycling. The polypeptide is Anhydro-N-acetylmuramic acid kinase (Shewanella sp. (strain ANA-3)).